The primary structure comprises 135 residues: Small ribosomal subunit protein uS17 (135 aa).

The interval Met1–Thr59 is disordered. Positions Ala8–Lys42 are enriched in low complexity. Positions Gly43–Thr59 are enriched in basic residues.

Belongs to the universal ribosomal protein uS17 family. In terms of assembly, part of the 30S ribosomal subunit.

Functionally, one of the primary rRNA binding proteins, it binds specifically to the 5'-end of 16S ribosomal RNA. The chain is Small ribosomal subunit protein uS17 from Mycobacterium bovis (strain ATCC BAA-935 / AF2122/97).